The chain runs to 251 residues: 1-(5-phosphoribosyl)-5-[(5-phosphoribosylamino)methylideneamino] imidazole-4-carboxamide isomerase (251 aa).

The Proton acceptor role is filled by D8. The Proton donor role is filled by D131.

This sequence belongs to the HisA/HisF family.

It is found in the cytoplasm. It catalyses the reaction 1-(5-phospho-beta-D-ribosyl)-5-[(5-phospho-beta-D-ribosylamino)methylideneamino]imidazole-4-carboxamide = 5-[(5-phospho-1-deoxy-D-ribulos-1-ylimino)methylamino]-1-(5-phospho-beta-D-ribosyl)imidazole-4-carboxamide. It participates in amino-acid biosynthesis; L-histidine biosynthesis; L-histidine from 5-phospho-alpha-D-ribose 1-diphosphate: step 4/9. This is 1-(5-phosphoribosyl)-5-[(5-phosphoribosylamino)methylideneamino] imidazole-4-carboxamide isomerase from Burkholderia lata (strain ATCC 17760 / DSM 23089 / LMG 22485 / NCIMB 9086 / R18194 / 383).